We begin with the raw amino-acid sequence, 396 residues long: Tryptophan synthase beta chain (396 aa).

Residue lysine 88 is modified to N6-(pyridoxal phosphate)lysine.

It belongs to the TrpB family. Tetramer of two alpha and two beta chains. It depends on pyridoxal 5'-phosphate as a cofactor.

The catalysed reaction is (1S,2R)-1-C-(indol-3-yl)glycerol 3-phosphate + L-serine = D-glyceraldehyde 3-phosphate + L-tryptophan + H2O. Its pathway is amino-acid biosynthesis; L-tryptophan biosynthesis; L-tryptophan from chorismate: step 5/5. Its function is as follows. The beta subunit is responsible for the synthesis of L-tryptophan from indole and L-serine. This chain is Tryptophan synthase beta chain, found in Actinobacillus pleuropneumoniae serotype 5b (strain L20).